A 39-amino-acid polypeptide reads, in one-letter code: Omega-actinopoditoxin-Mb1a (39 aa).

Intrachain disulfides connect C4-C19, C11-C30, and C18-C38.

In terms of processing, contains 3 disulfide bonds. Expressed by the venom gland.

The protein resides in the secreted. Functionally, potent inhibitor of insect, but not mammalian, voltage-gated calcium channels (Cav). The protein is Omega-actinopoditoxin-Mb1a of Missulena bradleyi (Eastern mouse spider).